Reading from the N-terminus, the 79-residue chain is Acyl carrier protein (79 aa).

The region spanning 2-77 (STIEERVKKI…QAIDYVKAHV (76 aa)) is the Carrier domain. Serine 37 is subject to O-(pantetheine 4'-phosphoryl)serine.

This sequence belongs to the acyl carrier protein (ACP) family. Post-translationally, 4'-phosphopantetheine is transferred from CoA to a specific serine of apo-ACP by AcpS. This modification is essential for activity because fatty acids are bound in thioester linkage to the sulfhydryl of the prosthetic group.

Its subcellular location is the cytoplasm. It functions in the pathway lipid metabolism; fatty acid biosynthesis. Functionally, carrier of the growing fatty acid chain in fatty acid biosynthesis. In Xanthomonas axonopodis pv. citri (strain 306), this protein is Acyl carrier protein.